The following is a 1009-amino-acid chain: MKTIAGLSWISALSSLASLPNGLGVSAQNNTPSTWPLHDNGLSDVVQWDHYSFKVNGKRLFVFSGEIHYWRIPVYEVWEDLLEKIKAAGFTAFAFYGNWAYHSANNKTLDFESGAHDFSKLFEIAHRVGLYVITRPGPYVNAEANAGGFPLWLTTGAYGKLRDDDPRYLQALDPYFSKFSELTSKHLVTNGGNALVYQIENEYGEQWKDRTKKIPNDAAGRYMQALEDSARANGIEIPLIHNDPNMNTKSWSKDYAPGAVGNVDVAGLDSYPSCWSCNLAECTGTNGKYVAYQVVNYYDHFKEVSPTQPSFFPEFQGGSYNPWGGPEGGCPGDIGADFANLFYRNLISQRVTAVSLYMMFGGTNWGAIAAPVTATSYDYSSPISENREIGAKFYETKNLAMFTRVADDLTVTDRLGSSSSYTTNPAVTASELRNPITKAAFYVTIHSVSSSSTTESFKLHISTSVGNLTIPQHSGSIVLNGHQSKIISTDFAMGNKTLTYSTAEILTYALIDSSPVVVLSTDVGGSVEFHVKGATKGSLASSGFTSNATFRAEAGGVTTNIERVTGMGVYQFNNGVKVVLADKPTAYLFWAPNLSNDPFAPVDQSVLIQGPYLVRGAALDGDVVALKGDVKNSTTIEVFAHETALTLSWNGKKLETSRTPYGSLKAQISAFNGTIPLPSLNDWKVNEGLPEKMPEYDDNGAAWVVANHTTTPNPTKPDTLPVLYVDEYGFHNSFHLFRGYFEGSATGAQLSVQGGLAFGWSAWLNGDLVGSWLGNTTLGVGNMTLSFANATVHANGTNVLLIAQDNTGHDLRGGATDPRGILRATLDGADFTSWKIAGEAGGENIQLDPVRGPLAEGGLTAERLGWHLSGFSDCDWASASPSTGFSGADIKFYRTTFPLDIPEDVDASFAFILNATGPKTVRVQLFVNGYQYARFNPYVGNEVKFPIPPGILNYAGDNVIGLSVWAQGNDGAKVDVEFVQEYAVESSWSSRFDSEYLRPEWTEERLAYA.

Positions 1-27 (MKTIAGLSWISALSSLASLPNGLGVSA) are cleaved as a signal peptide. Tyrosine 96 contacts substrate. N-linked (GlcNAc...) asparagine glycosylation occurs at asparagine 106. 4 residues coordinate substrate: asparagine 141, alanine 142, glutamate 143, and asparagine 201. Glutamate 202 acts as the Proton donor in catalysis. Tyrosine 271 is a substrate binding site. Residues cysteine 277 and cysteine 330 are joined by a disulfide bond. The active-site Nucleophile is glutamate 314. Tyrosine 379 contributes to the substrate binding site. N-linked (GlcNAc...) asparagine glycosylation is found at asparagine 467, asparagine 495, asparagine 547, asparagine 593, asparagine 632, asparagine 672, asparagine 707, asparagine 775, asparagine 782, asparagine 789, asparagine 795, and asparagine 914.

Belongs to the glycosyl hydrolase 35 family.

Its subcellular location is the secreted. It catalyses the reaction Hydrolysis of terminal non-reducing beta-D-galactose residues in beta-D-galactosides.. Cleaves beta-linked terminal galactosyl residues from gangliosides, glycoproteins, and glycosaminoglycans. In Pyrenophora tritici-repentis (strain Pt-1C-BFP) (Wheat tan spot fungus), this protein is Probable beta-galactosidase B (lacB).